We begin with the raw amino-acid sequence, 239 residues long: Large ribosomal subunit protein uL3 (239 aa).

Disordered regions lie at residues 140 to 164 and 211 to 239; these read SHRSIGSTGGRQDPGKTWKNKKMPG and PLPKEAPKPGKFKVAGEQAAEAPAMQEGA. Residue Gln-151 is modified to N5-methylglutamine.

The protein belongs to the universal ribosomal protein uL3 family. As to quaternary structure, part of the 50S ribosomal subunit. Forms a cluster with proteins L14 and L19. In terms of processing, methylated by PrmB.

Its function is as follows. One of the primary rRNA binding proteins, it binds directly near the 3'-end of the 23S rRNA, where it nucleates assembly of the 50S subunit. This Bradyrhizobium sp. (strain ORS 278) protein is Large ribosomal subunit protein uL3.